The sequence spans 159 residues: Type IV major alpha-pilin (159 aa).

The propeptide at 1 to 6 is leader sequence; that stretch reads MNAQKG. Residue F7 is modified to N-methylphenylalanine. A helical transmembrane segment spans residues 7-27; it reads FTLIELMIVIAIIGILAAIAL. The segment at 64–87 is disordered; that stretch reads VLSEESSTSKENIGLTSSETSTKP. Positions 67–87 are enriched in polar residues; that stretch reads EESSTSKENIGLTSSETSTKP. Cysteines 137 and 156 form a disulfide.

Belongs to the N-Me-Phe pilin family. As to quaternary structure, major component of the type IV pilus (T4P) that plays a role in surface and attachment to the host epithelial tissues.

It is found in the fimbrium. It localises to the membrane. In Moraxella bovis, this protein is Type IV major alpha-pilin (tfpI).